Here is a 340-residue protein sequence, read N- to C-terminus: Anthocyanidin reductase (340 aa).

Positions 49 and 169 each coordinate NADP(+).

This sequence belongs to the NAD(P)-dependent epimerase/dehydratase family. Dihydroflavonol-4-reductase subfamily. As to quaternary structure, homo- or heterodimer. As to expression, flowers and young siliques. Detected specifically in the endothelium of seed coat.

The catalysed reaction is a (2R,3R)-flavan-3-ol + 2 NAD(+) = an anthocyanidin with a 3-hydroxy group + 2 NADH + 2 H(+). The enzyme catalyses a (2R,3R)-flavan-3-ol + 2 NADP(+) = an anthocyanidin with a 3-hydroxy group + 2 NADPH + 2 H(+). Its pathway is secondary metabolite biosynthesis; flavonoid biosynthesis. Its activity is regulated as follows. Inhibited by (+)-catechin, quercetin and (+)- and (-)-dihydroquercetin. Not inhibited by salt. Positive cooperativity with NADPH acting as cosubstrate and modulator. Involved in the biosynthesis of condensed tannins. Converts cyanidin into (-)-epicatechin as the major product. The chain is Anthocyanidin reductase (BAN) from Arabidopsis thaliana (Mouse-ear cress).